Consider the following 777-residue polypeptide: Gliding motility regulatory protein (777 aa).

The 108-residue stretch at 1–108 (MDTEALKKSL…SDLNEDLSGA (108 aa)) folds into the HPt domain. The residue at position 49 (His-49) is a Phosphohistidine; by autocatalysis. Disordered regions lie at residues 129–149 (TPPA…PPAP) and 164–212 (PAPV…KSAV). Composition is skewed to pro residues over residues 139–149 (VAPPPAPPPAP) and 164–177 (PAPV…PPTQ). A compositionally biased stretch (low complexity) spans 178-197 (APVAEPGAHAAAAAPHPAAA). The Histidine kinase domain maps to 270–509 (DISNEVREQL…TITLRLPQSL (240 aa)). The 135-residue stretch at 511-645 (LMKVLLVRLG…VPDIMAEVRR (135 aa)) folds into the CheW-like domain. Residues 660-776 (RVLLVDDSPI…EVLAQAIDRL (117 aa)) enclose the Response regulatory domain. A 4-aspartylphosphate modification is found at Asp-709.

The catalysed reaction is ATP + protein L-histidine = ADP + protein N-phospho-L-histidine.. Functionally, frzE is involved in a sensory transduction pathway that controls the frequency at which cells reverse their gliding direction. FrzE seems to be capable of autophosphorylating itself on a histidine residue and then to transfer that group to an aspartate residue in the C-terminal part of the protein. The polypeptide is Gliding motility regulatory protein (frzE) (Myxococcus xanthus).